A 147-amino-acid chain; its full sequence is DNA polymerase epsilon subunit 3 (147 aa).

Ala2 is modified (N-acetylalanine). Thr83 carries the phosphothreonine modification. Residues 85–146 are a coiled coil; the sequence is LKEALEAYRR…EEQNEEEEVD (62 aa). Basic and acidic residues predominate over residues 93–124; the sequence is RREQKGKKEASEQKKKDKDKKTDSEEQDKSRD. The tract at residues 93–147 is disordered; it reads RREQKGKKEASEQKKKDKDKKTDSEEQDKSRDEDNDEDEERLEEEEQNEEEEVDN. The residue at position 122 (Ser122) is a Phosphoserine. Positions 125-147 are enriched in acidic residues; sequence EDNDEDEERLEEEEQNEEEEVDN.

As to quaternary structure, component of the DNA polymerase epsilon complex consisting of four subunits: the catalytic subunit POLE and the accessory subunits POLE2, POLE3 and POLE4. Interaction with POLE4 is a prerequisite for further binding with POLE and POLE2. Heterodimer with CHRAC1; binds to DNA. Component of the CHRAC ISWI chromatin remodeling complex at least composed of SMARCA5/SNF2H, BAZ1A/ACF1, CHRAC1 and POLE3; the complex preferentially binds DNA through the CHRAC1-POLE3 heterodimer and possesses ATP-dependent nucleosome-remodeling activity. Within the complex, the heterodimer with CHRAC1 interacts with SMARCA5/SNF2H; the interaction is direct and enhances nucleosome sliding activity by the SMARCA5/SNF2H and BAZ1A/ACF1 interaction. Within the complex, the heterodimer with CHRAC1 interacts with BAZ1A/ACF1; the interactions are direct.

It localises to the nucleus. Its function is as follows. Accessory component of the DNA polymerase epsilon complex. Participates in DNA repair and in chromosomal DNA replication. Forms a complex with CHRAC1 and binds naked DNA, which is then incorporated into chromatin, aided by the nucleosome-remodeling activity of ISWI/SNF2H and ACF1. Does not enhance nucleosome sliding activity of the ACF-5 ISWI chromatin remodeling complex. This Bos taurus (Bovine) protein is DNA polymerase epsilon subunit 3 (POLE3).